Here is a 325-residue protein sequence, read N- to C-terminus: ATP phosphoribosyltransferase (325 aa).

Belongs to the ATP phosphoribosyltransferase family. Long subfamily. The cofactor is Mg(2+).

The protein localises to the cytoplasm. The catalysed reaction is 1-(5-phospho-beta-D-ribosyl)-ATP + diphosphate = 5-phospho-alpha-D-ribose 1-diphosphate + ATP. Its pathway is amino-acid biosynthesis; L-histidine biosynthesis; L-histidine from 5-phospho-alpha-D-ribose 1-diphosphate: step 1/9. Its activity is regulated as follows. Feedback inhibited by histidine. Catalyzes the condensation of ATP and 5-phosphoribose 1-diphosphate to form N'-(5'-phosphoribosyl)-ATP (PR-ATP). Has a crucial role in the pathway because the rate of histidine biosynthesis seems to be controlled primarily by regulation of HisG enzymatic activity. This is ATP phosphoribosyltransferase from Nitrobacter winogradskyi (strain ATCC 25391 / DSM 10237 / CIP 104748 / NCIMB 11846 / Nb-255).